We begin with the raw amino-acid sequence, 147 residues long: Microsomal glutathione S-transferase 2 (147 aa).

A run of 3 helical transmembrane segments spans residues 6-26, 59-79, and 111-131; these read ILLA…ALQV, FYPI…QVFA, and SLGI…NSFL.

Belongs to the MAPEG family. In terms of assembly, homotrimer. In terms of tissue distribution, liver, spleen, skeletal muscle, heart, adrenals, pancreas, prostate, testis, fetal liver, and fetal spleen. Very low expression in lung, brain, placenta and bone marrow. Abundantly expressed in human umbilical vein endothelial cells (at protein level).

Its subcellular location is the endoplasmic reticulum membrane. It localises to the microsome membrane. It catalyses the reaction RX + glutathione = an S-substituted glutathione + a halide anion + H(+). The enzyme catalyses 1-chloro-2,4-dinitrobenzene + glutathione = 2,4-dinitrophenyl-S-glutathione + chloride + H(+). The catalysed reaction is leukotriene C4 = leukotriene A4 + glutathione. It carries out the reaction (5S)-hydroperoxy-(6E,8Z,11Z,14Z)-eicosatetraenoate + 2 glutathione = (5S)-hydroxy-(6E,8Z,11Z,14Z)-eicosatetraenoate + glutathione disulfide + H2O. Its activity is regulated as follows. Each monomer can bind on GSH molecule but only one subunit is catalytically active. Catalyzes several different glutathione-dependent reactions. Catalyzes the glutathione-dependent reduction of lipid hydroperoxides, such as 5-HPETE. Has glutathione transferase activity, toward xenobiotic electrophiles, such as 1-chloro-2, 4-dinitrobenzene (CDNB). Also catalyzes the conjugation of leukotriene A4 with reduced glutathione to form leukotriene C4 (LTC4). Involved in oxidative DNA damage induced by ER stress and anticancer agents by activating LTC4 biosynthetic machinery in nonimmune cells. The sequence is that of Microsomal glutathione S-transferase 2 (MGST2) from Homo sapiens (Human).